A 312-amino-acid polypeptide reads, in one-letter code: Methionyl-tRNA formyltransferase (312 aa).

110 to 113 (SLLP) provides a ligand contact to (6S)-5,6,7,8-tetrahydrofolate.

The protein belongs to the Fmt family.

It catalyses the reaction L-methionyl-tRNA(fMet) + (6R)-10-formyltetrahydrofolate = N-formyl-L-methionyl-tRNA(fMet) + (6S)-5,6,7,8-tetrahydrofolate + H(+). Functionally, attaches a formyl group to the free amino group of methionyl-tRNA(fMet). The formyl group appears to play a dual role in the initiator identity of N-formylmethionyl-tRNA by promoting its recognition by IF2 and preventing the misappropriation of this tRNA by the elongation apparatus. The sequence is that of Methionyl-tRNA formyltransferase from Streptococcus suis (strain 05ZYH33).